Here is a 99-residue protein sequence, read N- to C-terminus: Small ribosomal subunit protein uS19c (99 aa).

Belongs to the universal ribosomal protein uS19 family.

It is found in the plastid. The protein localises to the chloroplast. Functionally, protein S19 forms a complex with S13 that binds strongly to the 16S ribosomal RNA. The protein is Small ribosomal subunit protein uS19c of Oenothera biennis (German evening primrose).